The primary structure comprises 195 residues: Protein Fer3 (195 aa).

2 disordered regions span residues 1-24 (MQHP…LWGQ) and 56-82 (PLVP…RRRV). Positions 63-75 (STNGRANGSSSSS) are enriched in low complexity. The region spanning 86-138 (AQRRAANIRERRRMFNLNEAFDKLRRKVPTFAYEKRLSRIETLRLAITYIGFM) is the bHLH domain. The segment at 145–175 (TPSNSHKSRSDVYGSMNGHHQAPPPAIHPHH) is disordered.

The protein localises to the nucleus. Functionally, transcription factor that binds to the E-box and functions as inhibitor of transcription. DNA binding requires dimerization with an E protein. Inhibits transcription activation by ASCL1/MASH1 by sequestering E proteins. The protein is Protein Fer3 (fer3) of Drosophila melanogaster (Fruit fly).